The primary structure comprises 650 residues: Vitrin (650 aa).

An N-terminal signal peptide occupies residues 1-26; sequence MGIVVPTMKASVIEVLLVLLVTGIHS. The LCCL domain occupies 40 to 133; that stretch reads TVPQINCDVK…LSLPRWRESF (94 aa). Disulfide bonds link C46–C62 and C66–C86. Positions 198 to 226 are disordered; sequence RSTSKPFAASVTNSPRPQPVGHRSQEMEE. VWFA domains follow at residues 265–450 and 467–640; these read DLSF…VKRV and DIGF…IQNI. N492 carries an N-linked (GlcNAc...) asparagine glycan.

As to quaternary structure, binds dermatan sulfate and chondroitin sulfate.

The protein resides in the secreted. The protein localises to the extracellular space. Its subcellular location is the extracellular matrix. Promotes matrix assembly and cell adhesiveness. Plays a role in spinal cord formation by regulating the proliferation and differentiation of neural stem cells. The polypeptide is Vitrin (Vit) (Mus musculus (Mouse)).